The chain runs to 216 residues: ATP-dependent Clp protease proteolytic subunit (216 aa).

The Nucleophile role is filled by S120. The active site involves H145.

Belongs to the peptidase S14 family. Fourteen ClpP subunits assemble into 2 heptameric rings which stack back to back to give a disk-like structure with a central cavity, resembling the structure of eukaryotic proteasomes.

It localises to the cytoplasm. The catalysed reaction is Hydrolysis of proteins to small peptides in the presence of ATP and magnesium. alpha-casein is the usual test substrate. In the absence of ATP, only oligopeptides shorter than five residues are hydrolyzed (such as succinyl-Leu-Tyr-|-NHMec, and Leu-Tyr-Leu-|-Tyr-Trp, in which cleavage of the -Tyr-|-Leu- and -Tyr-|-Trp bonds also occurs).. Cleaves peptides in various proteins in a process that requires ATP hydrolysis. Has a chymotrypsin-like activity. Plays a major role in the degradation of misfolded proteins. This Cupriavidus pinatubonensis (strain JMP 134 / LMG 1197) (Cupriavidus necator (strain JMP 134)) protein is ATP-dependent Clp protease proteolytic subunit.